Consider the following 118-residue polypeptide: Peptidyl-tRNA hydrolase (118 aa).

Belongs to the PTH2 family.

Its subcellular location is the cytoplasm. The catalysed reaction is an N-acyl-L-alpha-aminoacyl-tRNA + H2O = an N-acyl-L-amino acid + a tRNA + H(+). In terms of biological role, the natural substrate for this enzyme may be peptidyl-tRNAs which drop off the ribosome during protein synthesis. The polypeptide is Peptidyl-tRNA hydrolase (Thermococcus sibiricus (strain DSM 12597 / MM 739)).